Consider the following 446-residue polypeptide: Chromosomal replication initiator protein DnaA (446 aa).

The domain I, interacts with DnaA modulators stretch occupies residues 1 to 72; it reads MENILDLWNK…ADTIYELTGE (72 aa). The tract at residues 72 to 109 is domain II; it reads EELSIKFIIPQNQDEVEAMPKSPIKKMSKEDPVDIPQN. The interval 110-326 is domain III, AAA+ region; the sequence is MLNPKYTFDT…GALIRVVAYS (217 aa). 4 residues coordinate ATP: glycine 154, glycine 156, lysine 157, and threonine 158. The domain IV, binds dsDNA stretch occupies residues 327 to 446; sequence SLINKDINAD…HVKEIKEQLK (120 aa).

Belongs to the DnaA family. Oligomerizes as a right-handed, spiral filament on DNA at oriC.

Its subcellular location is the cytoplasm. Functionally, plays an essential role in the initiation and regulation of chromosomal replication. ATP-DnaA binds to the origin of replication (oriC) to initiate formation of the DNA replication initiation complex once per cell cycle. Binds the DnaA box (a 9 base pair repeat at the origin) and separates the double-stranded (ds)DNA. Forms a right-handed helical filament on oriC DNA; dsDNA binds to the exterior of the filament while single-stranded (ss)DNA is stabiized in the filament's interior. The ATP-DnaA-oriC complex binds and stabilizes one strand of the AT-rich DNA unwinding element (DUE), permitting loading of DNA polymerase. After initiation quickly degrades to an ADP-DnaA complex that is not apt for DNA replication. Binds acidic phospholipids. In Bacillus pumilus (strain SAFR-032), this protein is Chromosomal replication initiator protein DnaA.